Reading from the N-terminus, the 481-residue chain is MPSPTVTSPQVAVNDIGSSEDFLAAIDKTIKYFNDGDIVEGTIVKVDRDEVLLDIGYKTEGVIPARELSIKHDVDPNEVVSVGDEVEALVLTKEDKEGRLILSKKRAQYERAWGTIEALKEKDEAVKGTVIEVVKGGLILDIGLRGFLPASLVEMRRVRDLQPYIGKEIEAKIIELDKNRNNVVLSRRAWLEQTQSEVRSEFLNNLQKGTIRKGVVSSIVNFGAFVDLGGVDGLVHVSELSWKHIDHPSEVVQVGDEVTVEVLDVDMDRERVSLSLKATQEDPWRHFARTHAIGQIVPGKVTKLVPFGAFVRVEEGIEGLVHISELAERHVEVPDQVVAVGDDAMVKVIDIDLERRRISLSLKQANEDYTEEFDPAKYGMADSYDEQGNYIFPEGFDAETNEWLEGFEKQRAEWEARYAEAERRHKMHTAQMEKFAAAEAAGRGADDQSSASSAPSEKTAGGSLASDAQLAALREKLAGSA.

S1 motif domains lie at 36 to 105 (GDIV…LSKK), 123 to 188 (DEAV…LSRR), 209 to 277 (GTIR…LSLK), and 294 to 363 (GQIV…LSLK). The tract at residues 429–467 (TAQMEKFAAAEAAGRGADDQSSASSAPSEKTAGGSLASD) is disordered. Positions 437 to 456 (AAEAAGRGADDQSSASSAPS) are enriched in low complexity.

It belongs to the bacterial ribosomal protein bS1 family.

Functionally, binds mRNA; thus facilitating recognition of the initiation point. It is needed to translate mRNA with a short Shine-Dalgarno (SD) purine-rich sequence. In Mycobacterium tuberculosis (strain CDC 1551 / Oshkosh), this protein is Small ribosomal subunit protein bS1 (rpsA).